The chain runs to 300 residues: Cation-efflux pump FieF (300 aa).

A helical transmembrane segment spans residues 24 to 44 (LLIKIFAWWYTGSVSILAALV). 2 residues coordinate Zn(2+): Asp-45 and Asp-49. Helical transmembrane passes span 82 to 102 (AALA…LTGI) and 114 to 134 (AGVG…LVTF). 2 residues coordinate Zn(2+): His-153 and Asp-157. Transmembrane regions (helical) follow at residues 156–176 (SDVM…YGWH) and 178–198 (ADAL…LRMG).

The protein belongs to the cation diffusion facilitator (CDF) transporter (TC 2.A.4) family. FieF subfamily. Homodimer.

It localises to the cell inner membrane. It catalyses the reaction Zn(2+)(in) + H(+)(out) = Zn(2+)(out) + H(+)(in). The catalysed reaction is Cd(2+)(in) + H(+)(out) = Cd(2+)(out) + H(+)(in). The enzyme catalyses Fe(2+)(in) + H(+)(out) = Fe(2+)(out) + H(+)(in). In terms of biological role, divalent metal cation transporter which exports Zn(2+), Cd(2+) and possibly Fe(2+). May be involved in zinc and iron detoxification by efflux. The chain is Cation-efflux pump FieF from Klebsiella pneumoniae subsp. pneumoniae (strain ATCC 700721 / MGH 78578).